Here is a 382-residue protein sequence, read N- to C-terminus: MKALHFGAGNIGRGFIGKLLADAGIQLTFADVNQVVLDALNARHSYQVHVVGETEQVDTVSGVNAVSSIGDDVVDLIAQVDLVTTAVGPVVLERIAPAIAKGLVKRKEQSNESPLNIIACENMVRGTTQLKGHVMNALPEDAKAWVEEHVGFVDSAVDRIVPPSASATNDPLEVTVETFSEWIVDKTQFKGALPNIPGMELTDNLMAFVERKLFTLNTGHAITAYLGKLAGHQTIRDAILDEKIRAVVKGAMEESGAVLIKRYGFDADKHAAYIQKILGRFENPYLKDDVERVGRQPLRKLSAGDRLIKPLLGTLEYGLPHKNLIEGIAAAMHFRSEDDPQAQELAALIADKGPQAALAQISGLDANSEVVSEAVTAYKAMQ.

Residue alanine 3–glycine 14 participates in NAD(+) binding. Position 269 is an N6-acetyllysine (lysine 269).

The protein belongs to the mannitol dehydrogenase family.

The enzyme catalyses D-mannitol 1-phosphate + NAD(+) = beta-D-fructose 6-phosphate + NADH + H(+). In Escherichia coli O9:H4 (strain HS), this protein is Mannitol-1-phosphate 5-dehydrogenase.